We begin with the raw amino-acid sequence, 368 residues long: 3-isopropylmalate dehydrogenase (368 aa).

77 to 88 contributes to the NAD(+) binding site; that stretch reads GPKWGTGAVRPE. Positions 95, 105, 134, and 226 each coordinate substrate. The Mg(2+) site is built by D226, D251, and D255. 290–301 serves as a coordination point for NAD(+); the sequence is GSAPDLPANKVN.

Belongs to the isocitrate and isopropylmalate dehydrogenases family. As to quaternary structure, homodimer. Mg(2+) is required as a cofactor. It depends on Mn(2+) as a cofactor.

The protein resides in the cytoplasm. It carries out the reaction (2R,3S)-3-isopropylmalate + NAD(+) = 4-methyl-2-oxopentanoate + CO2 + NADH. Its pathway is amino-acid biosynthesis; L-leucine biosynthesis; L-leucine from 3-methyl-2-oxobutanoate: step 3/4. Its function is as follows. Catalyzes the oxidation of 3-carboxy-2-hydroxy-4-methylpentanoate (3-isopropylmalate) to 3-carboxy-4-methyl-2-oxopentanoate. The product decarboxylates to 4-methyl-2 oxopentanoate. The protein is 3-isopropylmalate dehydrogenase (LEU2) of Kodamaea ohmeri (Yeast).